Reading from the N-terminus, the 315-residue chain is Cobalamin biosynthesis protein CobD (315 aa).

5 consecutive transmembrane segments (helical) span residues 48-68 (IAGF…TLGI), 77-97 (PILG…AKGL), 150-170 (DGII…AFLY), 200-220 (VFNY…SFIL), and 295-315 (MVSF…EVII).

It belongs to the CobD/CbiB family.

It is found in the cell membrane. The protein operates within cofactor biosynthesis; adenosylcobalamin biosynthesis. Its function is as follows. Converts cobyric acid to cobinamide by the addition of aminopropanol on the F carboxylic group. The sequence is that of Cobalamin biosynthesis protein CobD from Clostridium perfringens (strain 13 / Type A).